A 101-amino-acid chain; its full sequence is Urease subunit beta (101 aa).

It belongs to the urease beta subunit family. As to quaternary structure, heterotrimer of UreA (gamma), UreB (beta) and UreC (alpha) subunits. Three heterotrimers associate to form the active enzyme.

It is found in the cytoplasm. The catalysed reaction is urea + 2 H2O + H(+) = hydrogencarbonate + 2 NH4(+). It functions in the pathway nitrogen metabolism; urea degradation; CO(2) and NH(3) from urea (urease route): step 1/1. This chain is Urease subunit beta, found in Pseudomonas fluorescens (strain ATCC BAA-477 / NRRL B-23932 / Pf-5).